Reading from the N-terminus, the 680-residue chain is DNA-directed RNA polymerase subunit beta' (680 aa).

Positions 69, 71, 87, and 90 each coordinate Zn(2+). Asp489, Asp491, and Asp493 together coordinate Mg(2+).

This sequence belongs to the RNA polymerase beta' chain family. RpoC1 subfamily. As to quaternary structure, in plastids the minimal PEP RNA polymerase catalytic core is composed of four subunits: alpha, beta, beta', and beta''. When a (nuclear-encoded) sigma factor is associated with the core the holoenzyme is formed, which can initiate transcription. Mg(2+) serves as cofactor. It depends on Zn(2+) as a cofactor.

Its subcellular location is the plastid. The protein localises to the chloroplast. It carries out the reaction RNA(n) + a ribonucleoside 5'-triphosphate = RNA(n+1) + diphosphate. DNA-dependent RNA polymerase catalyzes the transcription of DNA into RNA using the four ribonucleoside triphosphates as substrates. In Capsella bursa-pastoris (Shepherd's purse), this protein is DNA-directed RNA polymerase subunit beta'.